A 395-amino-acid chain; its full sequence is S-adenosylmethionine synthase (395 aa).

Residue His16 coordinates ATP. Position 18 (Asp18) interacts with Mg(2+). K(+) is bound at residue Glu44. Residues Glu57 and Gln100 each coordinate L-methionine. Residues 100-110 (QSPDIAQGVDR) form a flexible loop region. ATP is bound by residues 167 to 169 (DAK), 233 to 234 (RF), Asp242, 248 to 249 (RK), Ala265, and Lys269. Residue Asp242 participates in L-methionine binding. Lys273 is an L-methionine binding site.

It belongs to the AdoMet synthase family. As to quaternary structure, homotetramer; dimer of dimers. Requires Mg(2+) as cofactor. It depends on K(+) as a cofactor.

The protein resides in the cytoplasm. The catalysed reaction is L-methionine + ATP + H2O = S-adenosyl-L-methionine + phosphate + diphosphate. Its pathway is amino-acid biosynthesis; S-adenosyl-L-methionine biosynthesis; S-adenosyl-L-methionine from L-methionine: step 1/1. Catalyzes the formation of S-adenosylmethionine (AdoMet) from methionine and ATP. The overall synthetic reaction is composed of two sequential steps, AdoMet formation and the subsequent tripolyphosphate hydrolysis which occurs prior to release of AdoMet from the enzyme. This Burkholderia cenocepacia (strain HI2424) protein is S-adenosylmethionine synthase.